The following is a 321-amino-acid chain: Olfactory receptor 52N2 (321 aa).

Topologically, residues 1-27 (MSGDNSSSLTPGFFILNGVPGLEATHI) are extracellular. An N-linked (GlcNAc...) asparagine glycan is attached at asparagine 5. The helical transmembrane segment at 28-48 (WISLPFCFMYIIAVVGNCGLI) threads the bilayer. Residues 49–56 (CLISHEEA) lie on the Cytoplasmic side of the membrane. Residues 57–77 (LHRPMYYFLALLSFTDVTLCT) traverse the membrane as a helical segment. The Extracellular portion of the chain corresponds to 78 to 101 (TMVPNMLCIFWFNLKEIDFNACLA). Cysteine 99 and cysteine 191 are joined by a disulfide. Residues 102-122 (QMFFVHMLTGMESGVLMLMAL) traverse the membrane as a helical segment. Topologically, residues 123–141 (DRYVAICYPLRYATILTNP) are cytoplasmic. The chain crosses the membrane as a helical span at residues 142–162 (VIAKAGLATFLRNVMLIIPFT). Topologically, residues 163–198 (LLTKRLPYCRGNFIPHTYCDHMSVAKVSCGNFKVNA) are extracellular. A helical transmembrane segment spans residues 199 to 219 (IYGLMVALLIGVFDICCISVS). Residues 220 to 239 (YTMILQAVMSLSSADARHKA) are Cytoplasmic-facing. A helical membrane pass occupies residues 240–260 (FSTCTSHMCSIVITYVAAFFT). The Extracellular segment spans residues 261–276 (FFTHRFVGHNIPNHIH). The chain crosses the membrane as a helical span at residues 277-297 (IIVANLYLLLPPTMNPIVYGV). Over 298 to 321 (KTKQIQEGVIKFLLGDKVSFTYDK) the chain is Cytoplasmic.

The protein belongs to the G-protein coupled receptor 1 family.

It localises to the cell membrane. Its function is as follows. Odorant receptor. The protein is Olfactory receptor 52N2 (OR52N2) of Homo sapiens (Human).